The following is a 505-amino-acid chain: L-carnitine/gamma-butyrobetaine antiporter (505 aa).

The next 12 membrane-spanning stretches (helical) occupy residues 10–30, 51–71, 92–112, 143–163, 195–215, 231–251, 263–283, 316–336, 347–367, 403–423, 446–466, and 475–495; these read IEPKVFFPLLIIVGILCWLTV, WGWAFEWYMVVMLFSWFWLVF, IFMMFASCTSAAVLFWGSIEI, GPLPWATYSFLSVAFAYFFFV, FYLVALIFAMGTSLGLATPLV, LDAIIITCWIILNAICVACGL, SYLSFLMLGWVFIVSGASFIM, WTVFYWAWWVIYAIQMSIFLA, LCFGMVMGLTASTWILWTVLG, LSTATMWGFFILCFIATVTLI, LLVRIGWSVLVGIIGIVLLAL, and AIIAGGCPLFFVNIMVTLSFI.

Belongs to the BCCT transporter (TC 2.A.15) family. CaiT subfamily. In terms of assembly, homotrimer.

It localises to the cell inner membrane. It carries out the reaction 4-(trimethylamino)butanoate(in) + (R)-carnitine(out) = 4-(trimethylamino)butanoate(out) + (R)-carnitine(in). It participates in amine and polyamine metabolism; carnitine metabolism. In terms of biological role, catalyzes the exchange of L-carnitine for gamma-butyrobetaine. The protein is L-carnitine/gamma-butyrobetaine antiporter of Salmonella typhi.